The primary structure comprises 65 residues: ITYTDCTESGQDLCLCEGSDVCGKGNKCILGSNGEENQCVTGEGTPKPQSHNDGDFEEIPEEYLQ.

Positions 1–3 are interaction with thrombin active site; that stretch reads ITY. Cystine bridges form between Cys-6–Cys-14, Cys-16–Cys-28, and Cys-22–Cys-39. Residues 39 to 65 are disordered; it reads CVTGEGTPKPQSHNDGDFEEIPEEYLQ. A glycan (O-linked (GalNAc...) threonine) is linked at Thr-45. The interval 55–65 is interaction with fibrinogen-binding exosite of thrombin; sequence DFEEIPEEYLQ. The span at 55-65 shows a compositional bias: acidic residues; that stretch reads DFEEIPEEYLQ. The residue at position 63 (Tyr-63) is a Sulfotyrosine.

Belongs to the protease inhibitor I14 (hirudin) family.

The protein resides in the secreted. Its function is as follows. Hirudin is a potent thrombin-specific protease inhibitor. It forms a stable non-covalent complex with alpha-thrombin, thereby abolishing its ability to cleave fibrinogen. This chain is Hirudin-2', found in Hirudo medicinalis (Medicinal leech).